Reading from the N-terminus, the 610-residue chain is Butyryl-CoA dehydrogenase Swol_1933 (610 aa).

Glutamate 451 (proton acceptor) is an active-site residue.

This sequence belongs to the acyl-CoA dehydrogenase family. FAD is required as a cofactor.

It is found in the cytoplasm. It catalyses the reaction butanoyl-CoA + oxidized [electron-transfer flavoprotein] + H(+) = (2E)-butenoyl-CoA + reduced [electron-transfer flavoprotein]. It carries out the reaction a short-chain 2,3-saturated fatty acyl-CoA + oxidized [electron-transfer flavoprotein] + H(+) = a short-chain (2E)-enoyl-CoA + reduced [electron-transfer flavoprotein]. Its pathway is lipid metabolism; butanoate metabolism. In terms of biological role, involved in syntrophic growth of S.wolfei with butyrate, as part of the butyrate oxidation pathway. Catalyzes the oxidation of butanoyl-CoA to crotonyl-CoA. Probably passes the electrons released by this reaction on to electron-transfer flavoproteins (EtfAB) to finally generate hydrogen and/or formate. The chain is Butyryl-CoA dehydrogenase Swol_1933 from Syntrophomonas wolfei subsp. wolfei (strain DSM 2245B / Goettingen).